The following is a 78-amino-acid chain: Acyl carrier protein (78 aa).

A Carrier domain is found at 2–77 (SDIAERVKKI…DAIKFLEKNA (76 aa)). An O-(pantetheine 4'-phosphoryl)serine modification is found at serine 37.

This sequence belongs to the acyl carrier protein (ACP) family. Post-translationally, 4'-phosphopantetheine is transferred from CoA to a specific serine of apo-ACP by AcpS. This modification is essential for activity because fatty acids are bound in thioester linkage to the sulfhydryl of the prosthetic group.

It is found in the cytoplasm. It participates in lipid metabolism; fatty acid biosynthesis. Its function is as follows. Carrier of the growing fatty acid chain in fatty acid biosynthesis. The chain is Acyl carrier protein from Azorhizobium caulinodans (strain ATCC 43989 / DSM 5975 / JCM 20966 / LMG 6465 / NBRC 14845 / NCIMB 13405 / ORS 571).